A 149-amino-acid polypeptide reads, in one-letter code: UPF0336 protein CMM_2793 (149 aa).

Residues 16–117 (APYLVGREKV…TVTKVATLGG (102 aa)) form the MaoC-like domain.

This sequence belongs to the UPF0336 family.

The polypeptide is UPF0336 protein CMM_2793 (Clavibacter michiganensis subsp. michiganensis (strain NCPPB 382)).